Reading from the N-terminus, the 146-residue chain is Phosphoribosyl-AMP cyclohydrolase (146 aa).

Mg(2+) is bound at residue D95. A Zn(2+)-binding site is contributed by C96. Residues D97 and D99 each contribute to the Mg(2+) site. Zn(2+) is bound by residues C112 and C119.

It belongs to the PRA-CH family. Homodimer. Requires Mg(2+) as cofactor. The cofactor is Zn(2+).

It localises to the cytoplasm. It carries out the reaction 1-(5-phospho-beta-D-ribosyl)-5'-AMP + H2O = 1-(5-phospho-beta-D-ribosyl)-5-[(5-phospho-beta-D-ribosylamino)methylideneamino]imidazole-4-carboxamide. It functions in the pathway amino-acid biosynthesis; L-histidine biosynthesis; L-histidine from 5-phospho-alpha-D-ribose 1-diphosphate: step 3/9. Its function is as follows. Catalyzes the hydrolysis of the adenine ring of phosphoribosyl-AMP. In Chromohalobacter salexigens (strain ATCC BAA-138 / DSM 3043 / CIP 106854 / NCIMB 13768 / 1H11), this protein is Phosphoribosyl-AMP cyclohydrolase.